The sequence spans 679 residues: NADPH--cytochrome P450 reductase (679 aa).

Residues 1-21 (MADSHGDTGATMPEAAAQEAS) are Lumenal-facing. The helical transmembrane segment at 22 to 42 (VFSMTDVVLFSLIVGLITYWF) threads the bilayer. Residues 43 to 679 (LFRKKKEEVP…KGRYSLDVWS (637 aa)) are Cytoplasmic-facing. Residue Ser-64 is modified to Phosphoserine. In terms of domain architecture, Flavodoxin-like spans 81–225 (IVVFYGSQTG…DFITWREQFW (145 aa)). FMN-binding positions include 87–92 (SQTGTA), 139–142 (ATYG), 174–183 (LGNKTYEHFN), and Asp-209. The FAD-binding FR-type domain occupies 280-522 (KNPFLATVTT…FVRKSQFRLP (243 aa)). An NADP(+)-binding site is contributed by Arg-299. FAD contacts are provided by residues Arg-425, 455-458 (RYYS), 473-475 (CAV), Tyr-479, and 489-492 (GVAT). NADP(+) contacts are provided by residues Thr-536, 597–598 (SR), 603–607 (KVYVQ), and Asp-640. Trp-678 contacts FAD.

Belongs to the NADPH--cytochrome P450 reductase family. This sequence in the N-terminal section; belongs to the flavodoxin family. It in the C-terminal section; belongs to the flavoprotein pyridine nucleotide cytochrome reductase family. It depends on FAD as a cofactor. FMN serves as cofactor.

It is found in the endoplasmic reticulum membrane. The catalysed reaction is 2 oxidized [cytochrome P450] + NADPH = 2 reduced [cytochrome P450] + NADP(+) + H(+). This enzyme is required for electron transfer from NADP to cytochrome P450 in microsomes. It can also provide electron transfer to heme oxygenase and cytochrome B5. The polypeptide is NADPH--cytochrome P450 reductase (Oryctolagus cuniculus (Rabbit)).